We begin with the raw amino-acid sequence, 541 residues long: Malate synthase (541 aa).

Catalysis depends on R169, which acts as the Proton acceptor. D454 functions as the Proton donor in the catalytic mechanism.

Belongs to the malate synthase family.

It localises to the cytoplasm. The enzyme catalyses glyoxylate + acetyl-CoA + H2O = (S)-malate + CoA + H(+). The protein operates within carbohydrate metabolism; glyoxylate cycle; (S)-malate from isocitrate: step 2/2. This chain is Malate synthase (aceB), found in Streptomyces clavuligerus.